We begin with the raw amino-acid sequence, 99 residues long: Pyruvate synthase subunit PorD (99 aa).

4Fe-4S ferredoxin-type domains lie at 32-60 (MRPILHKEKCIDCMFCWLYCPDQAIIQEG) and 61-91 (GIMKGFNYDYCKGCGLCANVCPKQAIEMRPE). Positions 41, 44, 47, 51, 71, 74, 77, and 81 each coordinate [4Fe-4S] cluster.

In terms of assembly, heterotetramer of one alpha, one beta, one delta and one gamma chain. Requires [4Fe-4S] cluster as cofactor.

In Thermotoga maritima (strain ATCC 43589 / DSM 3109 / JCM 10099 / NBRC 100826 / MSB8), this protein is Pyruvate synthase subunit PorD (porD).